A 520-amino-acid polypeptide reads, in one-letter code: Ubiquitin carboxyl-terminal hydrolase MINDY-1 (520 aa).

Positions 1-155 are disordered; it reads MADSCADTVD…ENEGAVAGAM (155 aa). Positions 26–37 are enriched in basic and acidic residues; that stretch reads KNEDLEQTKPQK. The span at 43–54 shows a compositional bias: polar residues; that stretch reads TEESSACVSQIK. The span at 77 to 86 shows a compositional bias: low complexity; that stretch reads ATSSASVTSK. Polar residues-rich tracts occupy residues 93 to 112 and 132 to 146; these read VINSQSYTPSQSEATPSFSM and SAKSARDGNQVSVQE. The active-site Nucleophile is the Cys-189. The active-site Proton acceptor is His-371. Disordered regions lie at residues 422 to 441 and 467 to 520; these read SQKPSAAAAQPSTQQQQQMQ and ELAR…CCIL. The tract at residues 441–479 is ubiquitin-binding domain (UBD); the sequence is QIDQDYLVAMSLQQEQGEAPGPLSDLELARQLQQEEYQQ. The segment covering 469 to 498 has biased composition (low complexity); that stretch reads ARQLQQEEYQQPQTQQQQQQQPSAGQMRGQ. Positions 511 to 520 are enriched in basic and acidic residues; it reads KKEETDCCIL.

It belongs to the MINDY deubiquitinase family. FAM63 subfamily.

It catalyses the reaction Thiol-dependent hydrolysis of ester, thioester, amide, peptide and isopeptide bonds formed by the C-terminal Gly of ubiquitin (a 76-residue protein attached to proteins as an intracellular targeting signal).. Functionally, hydrolase that can specifically remove 'Lys-48'-linked conjugated ubiquitin from proteins. May play a regulatory role at the level of protein turnover. This chain is Ubiquitin carboxyl-terminal hydrolase MINDY-1 (mindy1), found in Danio rerio (Zebrafish).